The chain runs to 507 residues: ATP synthase subunit alpha, chloroplastic (507 aa).

170–177 (GDRQTGKT) lines the ATP pocket. Phosphoserine is present on S383.

It belongs to the ATPase alpha/beta chains family. F-type ATPases have 2 components, CF(1) - the catalytic core - and CF(0) - the membrane proton channel. CF(1) has five subunits: alpha(3), beta(3), gamma(1), delta(1), epsilon(1). CF(0) has four main subunits: a, b, b' and c. In terms of processing, only phosphorylated in mesophyll cells, and only when cells are grown under high rather than low light regimes (70 vs 900 umol photons/m-2/s).

The protein localises to the plastid. Its subcellular location is the chloroplast thylakoid membrane. It catalyses the reaction ATP + H2O + 4 H(+)(in) = ADP + phosphate + 5 H(+)(out). In terms of biological role, produces ATP from ADP in the presence of a proton gradient across the membrane. The alpha chain is a regulatory subunit. This Zea mays (Maize) protein is ATP synthase subunit alpha, chloroplastic.